The primary structure comprises 618 residues: Pyranose 2-oxidase (618 aa).

H170 bears the Tele-8alpha-FAD histidine mark. The substrate site is built by Q441 and H443. The Proton acceptor role is filled by H540. N583 is an active-site residue.

It belongs to the GMC oxidoreductase family. In terms of assembly, homotetramer. FAD serves as cofactor.

It carries out the reaction D-glucose + O2 = 2-dehydro-D-glucose + H2O2. Catalyzes the oxidation of various aldopyranoses and disaccharides on carbon-2 to the corresponding 2-keto sugars concomitant with the reduction of O(2) to H(2)O(2). This Lyophyllum shimeji (Hon-shimeji) protein is Pyranose 2-oxidase (p2ox).